Consider the following 1165-residue polypeptide: Serine/threonine-protein kinase/endoribonuclease ireA (1165 aa).

The first 27 residues, 1–27, serve as a signal peptide directing secretion; it reads MRWRLPGARTTLPASVALLLLPILVAP. Over 28–504 the chain is Lumenal; that stretch reads QQLQEHDDLP…STIIRKGWDN (477 aa). The N-linked (GlcNAc...) asparagine glycan is linked to Asn-152. Residues 505-525 form a helical membrane-spanning segment; that stretch reads AVDIFVTILLLFFGAFIYFNS. Residues 526–1165 lie on the Cytoplasmic side of the membrane; that stretch reads HNIQELAKQK…RFKRYFTPVE (640 aa). Positions 547–668 are disordered; that stretch reads QPPLSTPSTP…SEGESKDQAD (122 aa). 2 stretches are compositionally biased toward basic and acidic residues: residues 591–600 and 611–620; these read ATPKPKRDRS and KIREPSRGPD. The span at 637–655 shows a compositional bias: basic residues; that stretch reads PKKKARRGRRGGKNHRRGK. Residues 656–668 are compositionally biased toward basic and acidic residues; sequence KPDSEGESKDQAD. The region spanning 711 to 1026 is the Protein kinase domain; it reads VFSDVVLGHG…ASAVLMHPFF (316 aa). Residues 717–725 and Lys-739 each bind ATP; that span reads LGHGSHGTV. Asp-832 serves as the catalytic Proton acceptor. Residues 899 to 919 are disordered; it reads AIQGGESQHTESSEPAVVDPQ. In terms of domain architecture, KEN spans 1029–1163; the sequence is PSDRLSFLCD…IDRFKRYFTP (135 aa).

Belongs to the protein kinase superfamily. Ser/Thr protein kinase family. In terms of assembly, homodimer; in response to the accumulation of unfolded proteins. It depends on Mg(2+) as a cofactor. Autophosphorylated mainly on serine residues.

The protein localises to the membrane. It carries out the reaction L-seryl-[protein] + ATP = O-phospho-L-seryl-[protein] + ADP + H(+). It catalyses the reaction L-threonyl-[protein] + ATP = O-phospho-L-threonyl-[protein] + ADP + H(+). 8-formyl-7-hydroxy-4-methylcoumarin inhibits the endonuclease activity and prebvent the splicing if the hacA mRNA. The kinase domain is activated by trans-autophosphorylation. Kinase activity is required for activation of the endoribonuclease domain. Its function is as follows. Senses unfolded proteins in the lumen of the endoplasmic reticulum (ER) via its N-terminal domain which leads to enzyme auto-activation. The active endoribonuclease domain responds by cleaving an intron from the downstream cytoplasmic mRNA hacA, allowing for the translation of a transcription factor that coordinates a series of adaptive responses that are collectively known as the unfolded protein response (UPR). In the absence of ER stress, ireA controls dual signaling circuits that are both hacA-dependent and hacA-independent and which contribute to the expression of traits that are essential for virulence. In Aspergillus fumigatus (strain ATCC MYA-4609 / CBS 101355 / FGSC A1100 / Af293) (Neosartorya fumigata), this protein is Serine/threonine-protein kinase/endoribonuclease ireA.